The following is a 325-amino-acid chain: NADH-quinone oxidoreductase subunit H (325 aa).

Transmembrane regions (helical) follow at residues 8 to 28 (VIDI…VVTC), 81 to 101 (GIFT…FAIV), 114 to 134 (IGVL…LFAG), 159 to 179 (FLGL…LGAI), 186 to 206 (LWNV…GVAV), 237 to 257 (FFVG…TLFF), 265 to 285 (LPPF…FILI), and 304 to 324 (ICLP…LYNA).

It belongs to the complex I subunit 1 family. NDH-1 is composed of 13 different subunits. Subunits NuoA, H, J, K, L, M, N constitute the membrane sector of the complex.

It localises to the cell inner membrane. It catalyses the reaction a quinone + NADH + 5 H(+)(in) = a quinol + NAD(+) + 4 H(+)(out). In terms of biological role, NDH-1 shuttles electrons from NADH, via FMN and iron-sulfur (Fe-S) centers, to quinones in the respiratory chain. The immediate electron acceptor for the enzyme in this species is believed to be ubiquinone. Couples the redox reaction to proton translocation (for every two electrons transferred, four hydrogen ions are translocated across the cytoplasmic membrane), and thus conserves the redox energy in a proton gradient. This subunit may bind ubiquinone. The sequence is that of NADH-quinone oxidoreductase subunit H from Sodalis glossinidius (strain morsitans).